We begin with the raw amino-acid sequence, 463 residues long: Interstitial collagenase B (463 aa).

An N-terminal signal peptide occupies residues 1 to 17; the sequence is MPSLPLLLRLWAASSYS. A propeptide spans 18-96 (activation peptide); that stretch reads FPVIQDGLQK…PRCGVPDVAP (79 aa). Residues 87 to 94 carry the Cysteine switch motif; the sequence is PRCGVPDV. Zn(2+) is bound at residue C89. Positions 95 to 273 are metalloprotease; it reads APYAITHNNP…PIQLTDATLD (179 aa). D155 is a Ca(2+) binding site. 2 residues coordinate Zn(2+): H165 and D167. 2 residues coordinate Ca(2+): D172 and G173. Position 180 (H180) interacts with Zn(2+). 2 residues coordinate Ca(2+): G187 and G189. Residue H193 coordinates Zn(2+). Residue D195 coordinates Ca(2+). Residue H215 coordinates Zn(2+). The active site involves E216. H219 and H225 together coordinate Zn(2+). Cysteines 275 and 463 form a disulfide. Hemopexin repeat units follow at residues 278-321 and 322-368; these read GLTF…WPNL and PGKF…FGFP. A Ca(2+)-binding site is contributed by D282. N-linked (GlcNAc...) asparagine glycosylation occurs at N370. Hemopexin repeat units follow at residues 371–419 and 420–463; these read VTNI…FPGI and DYKV…WFNC. 2 residues coordinate Ca(2+): D375 and D424.

This sequence belongs to the peptidase M10A family. Ca(2+) serves as cofactor. The cofactor is Zn(2+).

It localises to the secreted. It is found in the extracellular space. The protein localises to the extracellular matrix. It carries out the reaction Cleavage of the triple helix of collagen at about three-quarters of the length of the molecule from the N-terminus, at 775-Gly-|-Ile-776 in the alpha1(I) chain. Cleaves synthetic substrates and alpha-macroglobulins at bonds where P1' is a hydrophobic residue.. With respect to regulation, can be activated without removal of the activation peptide. The polypeptide is Interstitial collagenase B (Mmp1b) (Mus musculus (Mouse)).